The sequence spans 334 residues: Holliday junction branch migration complex subunit RuvB (334 aa).

A large ATPase domain (RuvB-L) region spans residues 1–182 (MDERLVSTEA…FGVHARLEYY (182 aa)). Residues Leu21, Arg22, Gly63, Lys66, Thr67, Thr68, 129-131 (EDF), Arg172, Tyr182, and Arg219 contribute to the ATP site. Thr67 contributes to the Mg(2+) binding site. The small ATPAse domain (RuvB-S) stretch occupies residues 183–253 (EQRDLAHIVS…IAEDALERLQ (71 aa)). Residues 256–334 (KLGLDHIDHK…HFQMEVPIRD (79 aa)) are head domain (RuvB-H). DNA-binding residues include Arg311 and Arg316.

This sequence belongs to the RuvB family. Homohexamer. Forms an RuvA(8)-RuvB(12)-Holliday junction (HJ) complex. HJ DNA is sandwiched between 2 RuvA tetramers; dsDNA enters through RuvA and exits via RuvB. An RuvB hexamer assembles on each DNA strand where it exits the tetramer. Each RuvB hexamer is contacted by two RuvA subunits (via domain III) on 2 adjacent RuvB subunits; this complex drives branch migration. In the full resolvosome a probable DNA-RuvA(4)-RuvB(12)-RuvC(2) complex forms which resolves the HJ.

The protein resides in the cytoplasm. The enzyme catalyses ATP + H2O = ADP + phosphate + H(+). Functionally, the RuvA-RuvB-RuvC complex processes Holliday junction (HJ) DNA during genetic recombination and DNA repair, while the RuvA-RuvB complex plays an important role in the rescue of blocked DNA replication forks via replication fork reversal (RFR). RuvA specifically binds to HJ cruciform DNA, conferring on it an open structure. The RuvB hexamer acts as an ATP-dependent pump, pulling dsDNA into and through the RuvAB complex. RuvB forms 2 homohexamers on either side of HJ DNA bound by 1 or 2 RuvA tetramers; 4 subunits per hexamer contact DNA at a time. Coordinated motions by a converter formed by DNA-disengaged RuvB subunits stimulates ATP hydrolysis and nucleotide exchange. Immobilization of the converter enables RuvB to convert the ATP-contained energy into a lever motion, pulling 2 nucleotides of DNA out of the RuvA tetramer per ATP hydrolyzed, thus driving DNA branch migration. The RuvB motors rotate together with the DNA substrate, which together with the progressing nucleotide cycle form the mechanistic basis for DNA recombination by continuous HJ branch migration. Branch migration allows RuvC to scan DNA until it finds its consensus sequence, where it cleaves and resolves cruciform DNA. This is Holliday junction branch migration complex subunit RuvB from Bacillus pumilus (strain SAFR-032).